The chain runs to 344 residues: tRNA N6-adenosine threonylcarbamoyltransferase (344 aa).

Fe cation is bound by residues H113 and H117. Substrate is bound by residues 135-139 (LVSGG), D169, G182, D186, and N278. A Fe cation-binding site is contributed by D306.

It belongs to the KAE1 / TsaD family. The cofactor is Fe(2+).

Its subcellular location is the cytoplasm. It carries out the reaction L-threonylcarbamoyladenylate + adenosine(37) in tRNA = N(6)-L-threonylcarbamoyladenosine(37) in tRNA + AMP + H(+). Required for the formation of a threonylcarbamoyl group on adenosine at position 37 (t(6)A37) in tRNAs that read codons beginning with adenine. Is involved in the transfer of the threonylcarbamoyl moiety of threonylcarbamoyl-AMP (TC-AMP) to the N6 group of A37, together with TsaE and TsaB. TsaD likely plays a direct catalytic role in this reaction. The sequence is that of tRNA N6-adenosine threonylcarbamoyltransferase from Corynebacterium efficiens (strain DSM 44549 / YS-314 / AJ 12310 / JCM 11189 / NBRC 100395).